Reading from the N-terminus, the 523-residue chain is Uridylate cyclase (523 aa).

Guanylate cyclase domains follow at residues 69–209 (VHVY…AKLA) and 318–438 (MSIF…IGIR). 2 residues coordinate a ribonucleoside 5'-triphosphate: tyrosine 72 and arginine 125. Mn(2+) is bound by residues aspartate 323, isoleucine 324, and aspartate 372.

The protein belongs to the adenylyl cyclase class-4/guanylyl cyclase family. Pyrimidine cyclase subfamily. Monomer. Requires Mn(2+) as cofactor.

It localises to the cytoplasm. It carries out the reaction UTP = 3',5'-cyclic UMP + diphosphate. In terms of biological role, pycsar (pyrimidine cyclase system for antiphage resistance) provides immunity against bacteriophage. The pyrimidine cyclase (PycC) synthesizes cyclic nucleotides in response to infection; these serve as specific second messenger signals. The signals activate the nearby effector, leading to bacterial cell death and abortive phage infection. A clade A Pycsar system. The pyrimidine cyclase gene of a two-gene Pycsar system, generates cyclic UMP (cUMP) from UTP, has little to no activity on ATP, CTP or GTP. Expression of this and effector RsPycTM (AC A0A4R2UGS4) probably confers resistance to some bacteriophage. The genes are probably only expressed in response to bacteriophage infection. This chain is Uridylate cyclase, found in Rhizobium sp. (strain PP-F2F-G36).